Reading from the N-terminus, the 251-residue chain is MRKPIIAGNWKMNKTLSEAVSFVEEVKGQIPAASAVDAVVCSPALFLERLVAATEGTDLQVGAQNMHFEKNGAFTGEISPVALSDLKVGYVVLGHSERREMFAETDESVNKKTIAAFEHGLTPIVCCGETLEERESGKTFDLVAGQVTKALAGLTEEQVKATVIAYEPIWAIGTGKSSSSADANEVCAHIRKVVAEAVSPEAAEAVRIQYGGSVKPENIKEYMAQSDIDGALVGGASLEPASFLGLLGAVK.

9-11 (NWK) is a binding site for substrate. The Electrophile role is filled by His95. Glu167 serves as the catalytic Proton acceptor. Substrate is bound by residues Gly173, Ser213, and 234 to 235 (GG). The residue at position 213 (Ser213) is a Phosphoserine.

Belongs to the triosephosphate isomerase family. As to quaternary structure, homodimer.

It localises to the cytoplasm. It carries out the reaction D-glyceraldehyde 3-phosphate = dihydroxyacetone phosphate. It participates in carbohydrate biosynthesis; gluconeogenesis. Its pathway is carbohydrate degradation; glycolysis; D-glyceraldehyde 3-phosphate from glycerone phosphate: step 1/1. Functionally, involved in the gluconeogenesis. Catalyzes stereospecifically the conversion of dihydroxyacetone phosphate (DHAP) to D-glyceraldehyde-3-phosphate (G3P). This Bacillus cereus (strain B4264) protein is Triosephosphate isomerase.